A 275-amino-acid polypeptide reads, in one-letter code: Undecaprenyl-diphosphatase (275 aa).

Transmembrane regions (helical) follow at residues 2 to 22 (LDIFKAVILGIVEGITEFLPI), 43 to 63 (FTDMFNVVIQLGAIMAVVVLY), 83 to 103 (WVLWSKVLLAVIPSVIVGLPL), 111 to 131 (LMNWAVVSATLIIYGVLFIVI), 147 to 167 (TLPYTTALFIGCFQLLSLIPG), 186 to 206 (YVATEFSFFMAIPTMFGASLL), 221 to 241 (LQGAVLAVGVIVSFVVAYLSI), and 255 to 275 (AFGWYRIVLGVLVIGYFTLIH).

It belongs to the UppP family.

It localises to the cell membrane. It carries out the reaction di-trans,octa-cis-undecaprenyl diphosphate + H2O = di-trans,octa-cis-undecaprenyl phosphate + phosphate + H(+). Functionally, catalyzes the dephosphorylation of undecaprenyl diphosphate (UPP). Confers resistance to bacitracin. The chain is Undecaprenyl-diphosphatase from Lactiplantibacillus plantarum (strain ATCC BAA-793 / NCIMB 8826 / WCFS1) (Lactobacillus plantarum).